Here is a 964-residue protein sequence, read N- to C-terminus: Fanconi-associated nuclease 1 homolog (964 aa).

The segment at 31 to 56 is disordered; that stretch reads SRSLQDDAADAEREAAAGGSSSGGGD. Residues 63–92 form a UBZ4-type zinc finger; the sequence is WVACPVCGESIRGTDYCVNTHLDICLTRGT. The Zn(2+) site is built by cysteine 66, cysteine 69, histidine 83, and cysteine 87. Glutamate 786, aspartate 907, glutamate 926, and valine 927 together coordinate Mn(2+). The VRR-NUC domain occupies 844 to 958; sequence GIAEEILISS…GFDVEVCKVS (115 aa).

This sequence belongs to the FAN1 family. The cofactor is Mn(2+). It depends on Mg(2+) as a cofactor.

The enzyme catalyses Hydrolytically removes 5'-nucleotides successively from the 3'-hydroxy termini of 3'-hydroxy-terminated oligonucleotides.. Nuclease required for the repair of DNA interstrand cross-links (ICL). Acts as a 5'-3' exonuclease that anchors at a cut end of DNA and cleaves DNA successively at every third nucleotide, allowing to excise an ICL from one strand through flanking incisions. In Oryza sativa subsp. japonica (Rice), this protein is Fanconi-associated nuclease 1 homolog.